A 339-amino-acid chain; its full sequence is tRNA N6-adenosine threonylcarbamoyltransferase (339 aa).

Positions 115 and 119 each coordinate Fe cation. Substrate is bound by residues 136–140 (LISGG), Asp-168, Glu-185, and Ser-265. Asp-293 is a binding site for Fe cation.

This sequence belongs to the KAE1 / TsaD family. It depends on Fe(2+) as a cofactor.

It localises to the cytoplasm. It catalyses the reaction L-threonylcarbamoyladenylate + adenosine(37) in tRNA = N(6)-L-threonylcarbamoyladenosine(37) in tRNA + AMP + H(+). Required for the formation of a threonylcarbamoyl group on adenosine at position 37 (t(6)A37) in tRNAs that read codons beginning with adenine. Is probably involved in the transfer of the threonylcarbamoyl moiety of threonylcarbamoyl-AMP (TC-AMP) to the N6 group of A37. The sequence is that of tRNA N6-adenosine threonylcarbamoyltransferase from Pyrobaculum calidifontis (strain DSM 21063 / JCM 11548 / VA1).